Here is a 313-residue protein sequence, read N- to C-terminus: UDP-N-acetylenolpyruvoylglucosamine reductase (313 aa).

Residues 31–207 enclose the FAD-binding PCMH-type domain; the sequence is VGGPADALVA…TGVDLGLGFD (177 aa). Arg180 is a catalytic residue. The Proton donor role is filled by Cys236. Residue Glu307 is part of the active site.

This sequence belongs to the MurB family. FAD serves as cofactor.

The protein localises to the cytoplasm. The enzyme catalyses UDP-N-acetyl-alpha-D-muramate + NADP(+) = UDP-N-acetyl-3-O-(1-carboxyvinyl)-alpha-D-glucosamine + NADPH + H(+). The protein operates within cell wall biogenesis; peptidoglycan biosynthesis. Functionally, cell wall formation. The chain is UDP-N-acetylenolpyruvoylglucosamine reductase from Desulfosudis oleivorans (strain DSM 6200 / JCM 39069 / Hxd3) (Desulfococcus oleovorans).